Here is a 150-residue protein sequence, read N- to C-terminus: MKIWVDADACPGVIKEILFRVADRAKVEVTLVANHSMRIPPSRFIKMVTVPSGFDVADDEIVKRLDAGDLVITADIPLASEVIDKGGIALNPRGELYTVQNIKSILNMRDFMDTMRASGVQTGGPAAIGASEKQAFGNQLDRFVTKYHKL.

It belongs to the UPF0178 family.

This chain is UPF0178 protein Ssed_1350, found in Shewanella sediminis (strain HAW-EB3).